The sequence spans 319 residues: Methyltransferase tpcM (319 aa).

Residues 63–155 (DVGAGIGPYA…QLRPGGTFAC (93 aa)) are methyltransferase domain.

This sequence belongs to the methyltransferase superfamily. As to expression, specifically expressed in conidia.

It participates in secondary metabolite biosynthesis. In terms of biological role, methyltransferase; part of the gene cluster that mediates the biosynthesis of trypacidin, a mycotoxin with antiprotozoal activity and that plays a role in the infection process. The pathway begins with the synthesis of atrochrysone thioester by the polyketide synthase (PKS) tpcC. The atrochrysone carboxyl ACP thioesterase tpcB then breaks the thioester bond and releases the atrochrysone carboxylic acid from tpcC. The decarboxylase tpcK converts atrochrysone carboxylic acid to atrochrysone which is further reduced into emodin anthrone. The next step is performed by the emodin anthrone oxygenase tpcL that catalyzes the oxidation of emodinanthrone to emodin. Emodin O-methyltransferase encoded by tpcA catalyzes methylation of the 8-hydroxy group of emodin to form questin. Ring cleavage of questin by questin oxidase tpcI leads to desmethylsulochrin via several intermediates including questin epoxide. Another methylation step catalyzed by tpcM leads to the formation of sulochrin which is further converted to monomethylsulfochrin by tpcH. Finally, the tpcJ catalyzes the conversion of monomethylsulfochrin to trypacidin. Trypacidin is toxic for human pulmonary and bronchial epithelial cells by initiating the intracellular formation of nitric oxide (NO) and hydrogen peroxide (H(2)O(2)), thus triggering host necrotic cell death. The trypacidin pathway is also able to produce endocrocin via a distinct route from the endocrocin Enc pathway. The polypeptide is Methyltransferase tpcM (Aspergillus fumigatus (strain ATCC MYA-4609 / CBS 101355 / FGSC A1100 / Af293) (Neosartorya fumigata)).